The primary structure comprises 360 residues: Mannitol-1-phosphate 5-dehydrogenase (360 aa).

Position 6–17 (6–17 (ALHFGAGNIGRG)) interacts with NAD(+).

The protein belongs to the mannitol dehydrogenase family.

It catalyses the reaction D-mannitol 1-phosphate + NAD(+) = beta-D-fructose 6-phosphate + NADH + H(+). The protein is Mannitol-1-phosphate 5-dehydrogenase of Mycoplasmopsis pulmonis (strain UAB CTIP) (Mycoplasma pulmonis).